We begin with the raw amino-acid sequence, 124 residues long: Small ribosomal subunit protein uS12 (124 aa).

Position 89 is a 3-methylthioaspartic acid (Asp89).

Belongs to the universal ribosomal protein uS12 family. In terms of assembly, part of the 30S ribosomal subunit. Contacts proteins S8 and S17. May interact with IF1 in the 30S initiation complex.

With S4 and S5 plays an important role in translational accuracy. Functionally, interacts with and stabilizes bases of the 16S rRNA that are involved in tRNA selection in the A site and with the mRNA backbone. Located at the interface of the 30S and 50S subunits, it traverses the body of the 30S subunit contacting proteins on the other side and probably holding the rRNA structure together. The combined cluster of proteins S8, S12 and S17 appears to hold together the shoulder and platform of the 30S subunit. This Buchnera aphidicola subsp. Schizaphis graminum (strain Sg) protein is Small ribosomal subunit protein uS12.